Consider the following 349-residue polypeptide: Microbial Terpene synthase-like protein 1 (349 aa).

The Mg(2+) site is built by Asp-98, Asp-102, Asn-243, and Ser-247. The DDXXD motif signature appears at 98–102 (DDILD).

The protein belongs to the terpene synthase family. Mg(2+) is required as a cofactor.

The protein operates within secondary metabolite biosynthesis; terpenoid biosynthesis. Its function is as follows. Sesquiterpene synthase converting farnesyl diphosphate to six sesquiterpenes, with beta-elemene, delta-cadinene and an unidentified oxygenated sesquiterpene as the major products. Has no diterpene synthase activity. The chain is Microbial Terpene synthase-like protein 1 from Selaginella moellendorffii (Spikemoss).